Consider the following 303-residue polypeptide: NAC domain-containing protein 48 (303 aa).

The NAC domain maps to 9 to 159 (LPPGFRFHPT…DWVLCRIYNK (151 aa)).

In terms of assembly, interacts with NAC071. In terms of tissue distribution, widely expressed.

It localises to the nucleus. Functionally, transcription activator that binds to the promoter of the stress response gene LEA19. Involved in tolerance to abiotic stresses. Transcription activator involved in response to abiotic and biotic stresses. Involved in drought and salt stress responses, and defense response to the rice blast fungus. Transcription activator involved tolerance to cold and salt stresses. Transcription activator involved in tolerance to drought stress. Targets directly and activates genes involved in membrane modification, nicotianamine (NA) biosynthesis, glutathione relocation, accumulation of phosphoadenosine phosphosulfate and glycosylation in roots. Controls root growth at early vegetative stage through chromatin modification and histone lysine deacytaltion by HDAC1. In Oryza sativa subsp. japonica (Rice), this protein is NAC domain-containing protein 48.